The primary structure comprises 264 residues: U1 snRNP-associated protein usp106 (264 aa).

A coiled-coil region spans residues 83–126; the sequence is DYLEDLERHVDDCNKRIDIAEARREKTKEEEERIDELMRDIIHT. A compositionally biased stretch (basic and acidic residues) spans 233–258; sequence EDREKSRDKKDGEKQRDNLASFEDKI. Residues 233 to 264 form a disordered region; that stretch reads EDREKSRDKKDGEKQRDNLASFEDKISTSFVA.

It belongs to the Luc7 family. As to quaternary structure, component of the U1 snRNP particle, a subcomplex of the spliceosome.

It is found in the cytoplasm. It localises to the nucleus. In terms of biological role, component of the U1 snRNP particle, which recognizes and binds the 5'-splice site of pre-mRNA. Together with other non-snRNP factors, U1 snRNP forms the spliceosomal commitment complex, that targets pre-mRNA to the splicing pathway. This Schizosaccharomyces pombe (strain 972 / ATCC 24843) (Fission yeast) protein is U1 snRNP-associated protein usp106 (usp106).